Here is a 362-residue protein sequence, read N- to C-terminus: F-box protein At1g54550 (362 aa).

Residues 1-47 enclose the F-box domain; that stretch reads MATVTDLPDDLVREIFSRVPLTSLRAVRSTCKKWNAISKYDILGKKA.

This Arabidopsis thaliana (Mouse-ear cress) protein is F-box protein At1g54550.